Here is a 187-residue protein sequence, read N- to C-terminus: Threonylcarbamoyl-AMP synthase (187 aa).

One can recognise a YrdC-like domain in the interval 4-187; that stretch reads TLDLDRAVAA…DARSGQILRD (184 aa).

This sequence belongs to the SUA5 family. TsaC subfamily.

The protein resides in the cytoplasm. It carries out the reaction L-threonine + hydrogencarbonate + ATP = L-threonylcarbamoyladenylate + diphosphate + H2O. In terms of biological role, required for the formation of a threonylcarbamoyl group on adenosine at position 37 (t(6)A37) in tRNAs that read codons beginning with adenine. Catalyzes the conversion of L-threonine, HCO(3)(-)/CO(2) and ATP to give threonylcarbamoyl-AMP (TC-AMP) as the acyladenylate intermediate, with the release of diphosphate. The protein is Threonylcarbamoyl-AMP synthase of Xanthomonas axonopodis pv. citri (strain 306).